The primary structure comprises 333 residues: Ornithine carbamoyltransferase (333 aa).

Carbamoyl phosphate-binding positions include 56–59, arginine 107, and 134–137; these read STRT and HPTQ. Residues asparagine 167, aspartate 231, and 235–236 contribute to the L-ornithine site; that span reads SM. Carbamoyl phosphate-binding positions include 273–274 and arginine 318; that span reads CL.

It belongs to the aspartate/ornithine carbamoyltransferase superfamily. OTCase family.

It is found in the cytoplasm. It carries out the reaction carbamoyl phosphate + L-ornithine = L-citrulline + phosphate + H(+). It functions in the pathway amino-acid degradation; L-arginine degradation via ADI pathway; carbamoyl phosphate from L-arginine: step 2/2. Reversibly catalyzes the transfer of the carbamoyl group from carbamoyl phosphate (CP) to the N(epsilon) atom of ornithine (ORN) to produce L-citrulline. This Clostridium botulinum (strain ATCC 19397 / Type A) protein is Ornithine carbamoyltransferase.